A 463-amino-acid polypeptide reads, in one-letter code: A-type ATP synthase subunit B (463 aa).

Belongs to the ATPase alpha/beta chains family. Has multiple subunits with at least A(3), B(3), C, D, E, F, H, I and proteolipid K(x).

It localises to the cell membrane. Functionally, component of the A-type ATP synthase that produces ATP from ADP in the presence of a proton gradient across the membrane. The B chain is a regulatory subunit. This is A-type ATP synthase subunit B from Thermococcus sp. (strain KI).